The sequence spans 473 residues: Ribulose bisphosphate carboxylase large chain (473 aa).

2 residues coordinate substrate: Asn116 and Thr166. Lys168 functions as the Proton acceptor in the catalytic mechanism. Position 170 (Lys170) interacts with substrate. Mg(2+) contacts are provided by Lys194, Asp196, and Glu197. Lys194 is subject to N6-carboxylysine. His287 functions as the Proton acceptor in the catalytic mechanism. 3 residues coordinate substrate: Arg288, His320, and Ser372.

This sequence belongs to the RuBisCO large chain family. Type I subfamily. As to quaternary structure, heterohexadecamer of 8 large chains and 8 small chains. Requires Mg(2+) as cofactor.

It carries out the reaction 2 (2R)-3-phosphoglycerate + 2 H(+) = D-ribulose 1,5-bisphosphate + CO2 + H2O. The enzyme catalyses D-ribulose 1,5-bisphosphate + O2 = 2-phosphoglycolate + (2R)-3-phosphoglycerate + 2 H(+). RuBisCO catalyzes two reactions: the carboxylation of D-ribulose 1,5-bisphosphate, the primary event in carbon dioxide fixation, as well as the oxidative fragmentation of the pentose substrate. Both reactions occur simultaneously and in competition at the same active site. This is Ribulose bisphosphate carboxylase large chain from Nitrobacter winogradskyi (Nitrobacter agilis).